A 358-amino-acid chain; its full sequence is Small ribosomal subunit biogenesis GTPase RsgA 2 (358 aa).

One can recognise a CP-type G domain in the interval 106 to 261; that stretch reads AEQLIAANVD…LIDTPGMREI (156 aa). Residues 151-154 and 203-211 each bind GTP; these read SKAD and GSSGVGKST. Zn(2+) contacts are provided by Cys-284, Cys-289, His-291, and Cys-297.

The protein belongs to the TRAFAC class YlqF/YawG GTPase family. RsgA subfamily. As to quaternary structure, monomer. Associates with 30S ribosomal subunit, binds 16S rRNA. Requires Zn(2+) as cofactor.

It is found in the cytoplasm. In terms of biological role, one of several proteins that assist in the late maturation steps of the functional core of the 30S ribosomal subunit. Helps release RbfA from mature subunits. May play a role in the assembly of ribosomal proteins into the subunit. Circularly permuted GTPase that catalyzes slow GTP hydrolysis, GTPase activity is stimulated by the 30S ribosomal subunit. In Vibrio parahaemolyticus serotype O3:K6 (strain RIMD 2210633), this protein is Small ribosomal subunit biogenesis GTPase RsgA 2.